The chain runs to 214 residues: Octanoyltransferase (214 aa).

Residues 29–214 (SETLDEIWVL…QHLQKQLIPS (186 aa)) enclose the BPL/LPL catalytic domain. Substrate contacts are provided by residues 69 to 76 (RGGEITYH), 146 to 148 (ALG), and 159 to 161 (GLA). Cys-177 functions as the Acyl-thioester intermediate in the catalytic mechanism.

This sequence belongs to the LipB family.

Its subcellular location is the cytoplasm. It catalyses the reaction octanoyl-[ACP] + L-lysyl-[protein] = N(6)-octanoyl-L-lysyl-[protein] + holo-[ACP] + H(+). Its pathway is protein modification; protein lipoylation via endogenous pathway; protein N(6)-(lipoyl)lysine from octanoyl-[acyl-carrier-protein]: step 1/2. Catalyzes the transfer of endogenously produced octanoic acid from octanoyl-acyl-carrier-protein onto the lipoyl domains of lipoate-dependent enzymes. Lipoyl-ACP can also act as a substrate although octanoyl-ACP is likely to be the physiological substrate. The chain is Octanoyltransferase from Polynucleobacter necessarius subsp. necessarius (strain STIR1).